A 76-amino-acid chain; its full sequence is DNA-directed RNA polymerase subunit epsilon (76 aa).

Belongs to the RNA polymerase subunit epsilon family. In terms of assembly, RNAP is composed of a core of 2 alpha, a beta and a beta' subunit. The core is associated with a delta subunit, and at least one of epsilon or omega. When a sigma factor is associated with the core the holoenzyme is formed, which can initiate transcription.

The enzyme catalyses RNA(n) + a ribonucleoside 5'-triphosphate = RNA(n+1) + diphosphate. A non-essential component of RNA polymerase (RNAP). The chain is DNA-directed RNA polymerase subunit epsilon from Streptococcus sanguinis (strain SK36).